The primary structure comprises 197 residues: FMN-dependent NADH:quinone oxidoreductase (197 aa).

Ser-10 serves as a coordination point for FMN.

Belongs to the azoreductase type 1 family. As to quaternary structure, homodimer. FMN is required as a cofactor.

The enzyme catalyses 2 a quinone + NADH + H(+) = 2 a 1,4-benzosemiquinone + NAD(+). It catalyses the reaction N,N-dimethyl-1,4-phenylenediamine + anthranilate + 2 NAD(+) = 2-(4-dimethylaminophenyl)diazenylbenzoate + 2 NADH + 2 H(+). Its function is as follows. Quinone reductase that provides resistance to thiol-specific stress caused by electrophilic quinones. Functionally, also exhibits azoreductase activity. Catalyzes the reductive cleavage of the azo bond in aromatic azo compounds to the corresponding amines. The protein is FMN-dependent NADH:quinone oxidoreductase of Mycoplasma pneumoniae (strain ATCC 29342 / M129 / Subtype 1) (Mycoplasmoides pneumoniae).